The following is a 475-amino-acid chain: Trigger factor (475 aa).

A PPIase FKBP-type domain is found at 165–250 (GDRVTIDYLG…VKAVFRPDEL (86 aa)). A compositionally biased stretch (basic and acidic residues) spans 439–466 (EYDETDVPEEKPAKKKSAVKEKSAEKTS). Residues 439–475 (EYDETDVPEEKPAKKKSAVKEKSAEKTSAKKKAPKKA) are disordered.

Belongs to the FKBP-type PPIase family. Tig subfamily.

The protein resides in the cytoplasm. It carries out the reaction [protein]-peptidylproline (omega=180) = [protein]-peptidylproline (omega=0). Its function is as follows. Involved in protein export. Acts as a chaperone by maintaining the newly synthesized protein in an open conformation. Functions as a peptidyl-prolyl cis-trans isomerase. The chain is Trigger factor from Bartonella tribocorum (strain CIP 105476 / IBS 506).